The chain runs to 450 residues: Probable glycine dehydrogenase (decarboxylating) subunit 1 (450 aa).

Belongs to the GcvP family. N-terminal subunit subfamily. In terms of assembly, the glycine cleavage system is composed of four proteins: P, T, L and H. In this organism, the P 'protein' is a heterodimer of two subunits.

It carries out the reaction N(6)-[(R)-lipoyl]-L-lysyl-[glycine-cleavage complex H protein] + glycine + H(+) = N(6)-[(R)-S(8)-aminomethyldihydrolipoyl]-L-lysyl-[glycine-cleavage complex H protein] + CO2. Functionally, the glycine cleavage system catalyzes the degradation of glycine. The P protein binds the alpha-amino group of glycine through its pyridoxal phosphate cofactor; CO(2) is released and the remaining methylamine moiety is then transferred to the lipoamide cofactor of the H protein. This is Probable glycine dehydrogenase (decarboxylating) subunit 1 from Staphylococcus haemolyticus (strain JCSC1435).